We begin with the raw amino-acid sequence, 148 residues long: Endothelial differentiation-related factor 1 (148 aa).

At Ala-2 the chain carries N-acetylalanine. At Ser-4 the chain carries Phosphoserine. N6-methyllysine is present on Lys-25. Residues 33-42 (RRGEDVETSK) show a composition bias toward basic and acidic residues. The tract at residues 33-66 (RRGEDVETSKKWAAGQNKQHSITKNTAKLDRETE) is disordered. Positions 37 to 113 (DVETSKKWAA…QVIADYESGR (77 aa)) are interaction with NR5A2, PPARG and NR1H3. Over residues 48–58 (QNKQHSITKNT) the composition is skewed to polar residues. The interval 69–108 (HHDRVTLEVGKVIQQGRQSKGLTQKDLATKINEKPQVIAD) is interaction with TBP and NR5A1. Positions 81 to 88 (IQQGRQSK) match the IQ motif motif. One can recognise an HTH cro/C1-type domain in the interval 81–135 (IQQGRQSKGLTQKDLATKINEKPQVIADYESGRAIPNNQVLGKIERAIGLKLRGK). Positions 92-111 (QKDLATKINEKPQVIADYES) form a DNA-binding region, H-T-H motif.

In terms of assembly, interacts with TBP and the transcription factor IID (TFIID) complex, NR5A2, NR1H3 and PPARG. Interaction with TBP is regulated by phosphorylation. Binds NR5A1, ATF1, FOS and JUN via their conserved basic region. Binding to calmodulin is regulated by calcium and phosphorylation of the IQ motif. Post-translationally, phosphorylated (by PKA and PKC). In terms of tissue distribution, expressed in brain, liver, lung, kidney and heart (at protein level). Ubiquitously expressed. More abundant in heart, pancreas, liver, intestine and adipose tissues.

It is found in the cytoplasm. The protein localises to the nucleus. Its function is as follows. Transcriptional coactivator stimulating NR5A1 and ligand-dependent NR1H3/LXRA and PPARG transcriptional activities. Enhances the DNA-binding activity of ATF1, ATF2, CREB1 and NR5A1. Regulates nitric oxid synthase activity probably by sequestering calmodulin in the cytoplasm. May function in endothelial cells differentiation, hormone-induced cardiomyocytes hypertrophy and lipid metabolism. The protein is Endothelial differentiation-related factor 1 (EDF1) of Homo sapiens (Human).